The chain runs to 675 residues: PTS system glucose-specific EIICBA component (675 aa).

Residues 3–414 (KKLFGQLQRI…FNFKTPGRED (412 aa)) enclose the PTS EIIC type-1 domain. The next 11 membrane-spanning stretches (helical) occupy residues 16–36 (LMLPVAILPAAGLLLAIGTAF), 59–79 (MMTGAGGIIFDNLPIIFALGV), 81–101 (IGLAGGDGVAAIAAFVGFIIM), 126–146 (VLGIPTLQTGVFGGIIIGALA), 173–193 (IMMATTSFILAFPMAWIWPFI), 199–219 (AFSTGLLDSNTGLAVFLFGFI), 273–293 (FMQGEFPVMMFGLPAAALAIY), 303–323 (VVGGLMLSAALTSFLTGITEP), 328–348 (FLFVAPLLFFIHAVLDGLSFL), 355–375 (LHLGYTFSGGFIDFVLLGILP), and 378–398 (TPWWLVIPVGLVYAVIYYVVF). Residues 425–506 (SKLPFDVLDA…ARIMNGDITK (82 aa)) form the PTS EIIB type-1 domain. The Phosphocysteine intermediate; for EIIB activity role is filled by Cys447. In terms of domain architecture, PTS EIIA type-1 spans 547–651 (DKVFSEKMMG…SVVTPVIITN (105 aa)). The Tele-phosphohistidine intermediate; for EIIA activity role is filled by His599.

The protein resides in the cell membrane. The catalysed reaction is N(pros)-phospho-L-histidyl-[protein] + D-glucose(out) = D-glucose 6-phosphate(in) + L-histidyl-[protein]. The phosphoenolpyruvate-dependent sugar phosphotransferase system (sugar PTS), a major carbohydrate active transport system, catalyzes the phosphorylation of incoming sugar substrates concomitantly with their translocation across the cell membrane. This system is involved in glucose transport. The sequence is that of PTS system glucose-specific EIICBA component (ptsG) from Staphylococcus haemolyticus (strain JCSC1435).